We begin with the raw amino-acid sequence, 338 residues long: Ketol-acid reductoisomerase (NADP(+)) (338 aa).

The KARI N-terminal Rossmann domain occupies 1-181 (MQVYYDKDCD…GGGRSGIIET (181 aa)). Residues 24–27 (YGSQ), Arg47, Ser50, Ser52, and 82–85 (DEFQ) each bind NADP(+). His107 is an active-site residue. NADP(+) is bound at residue Gly133. The KARI C-terminal knotted domain occupies 182-327 (TFKDETETDL…GKLRAMMPWI (146 aa)). Residues Asp190, Glu194, Glu226, and Glu230 each contribute to the Mg(2+) site. Substrate is bound at residue Ser251.

It belongs to the ketol-acid reductoisomerase family. The cofactor is Mg(2+).

The catalysed reaction is (2R)-2,3-dihydroxy-3-methylbutanoate + NADP(+) = (2S)-2-acetolactate + NADPH + H(+). It carries out the reaction (2R,3R)-2,3-dihydroxy-3-methylpentanoate + NADP(+) = (S)-2-ethyl-2-hydroxy-3-oxobutanoate + NADPH + H(+). The protein operates within amino-acid biosynthesis; L-isoleucine biosynthesis; L-isoleucine from 2-oxobutanoate: step 2/4. It functions in the pathway amino-acid biosynthesis; L-valine biosynthesis; L-valine from pyruvate: step 2/4. Its function is as follows. Involved in the biosynthesis of branched-chain amino acids (BCAA). Catalyzes an alkyl-migration followed by a ketol-acid reduction of (S)-2-acetolactate (S2AL) to yield (R)-2,3-dihydroxy-isovalerate. In the isomerase reaction, S2AL is rearranged via a Mg-dependent methyl migration to produce 3-hydroxy-3-methyl-2-ketobutyrate (HMKB). In the reductase reaction, this 2-ketoacid undergoes a metal-dependent reduction by NADPH to yield (R)-2,3-dihydroxy-isovalerate. The polypeptide is Ketol-acid reductoisomerase (NADP(+)) (Saccharophagus degradans (strain 2-40 / ATCC 43961 / DSM 17024)).